The following is a 96-amino-acid chain: uncharacterized protein (96 aa).

This is an uncharacterized protein from Homo sapiens (Human).